Consider the following 299-residue polypeptide: Acetylglutamate kinase (299 aa).

Substrate contacts are provided by residues Gly72–Gly73, Arg94, and Asn196.

It belongs to the acetylglutamate kinase family. ArgB subfamily.

It is found in the cytoplasm. The catalysed reaction is N-acetyl-L-glutamate + ATP = N-acetyl-L-glutamyl 5-phosphate + ADP. Its pathway is amino-acid biosynthesis; L-arginine biosynthesis; N(2)-acetyl-L-ornithine from L-glutamate: step 2/4. Catalyzes the ATP-dependent phosphorylation of N-acetyl-L-glutamate. The sequence is that of Acetylglutamate kinase from Burkholderia cenocepacia (strain HI2424).